A 327-amino-acid polypeptide reads, in one-letter code: MHSATMVFKRAATPHPEKAEWSVDDVEALLGLPFMELVFRAAEIHRQFFDPTKVQLSTLVSIKTGGCPEDCGYCPQSVHHDTPVADQPMMTVDEVVAAARQAKANGAGRFCMGAAWRGPKDADLQKTLDMVREVKALGLETCATFGLLRDGQAEQLKDAGLDYYNHNLDTAPDKYGDIIQTREYEDRLDTLGKVRKAGLSVCCGGIVGMNETRRDRAGLIVQLANLDPQPESVPVNNLVQVVGTPLEGAERLDWTEFVRTIAVARITMPASYVRLSAGRREMDEATQALCFLAGANSIFYGDKLLTTGNPDVVADQSLMAKLNLQPL.

In terms of domain architecture, Radical SAM core spans 52–279 (TKVQLSTLVS…ASYVRLSAGR (228 aa)). C67, C71, and C74 together coordinate [4Fe-4S] cluster. [2Fe-2S] cluster contacts are provided by C111, C142, C202, and R274.

Belongs to the radical SAM superfamily. Biotin synthase family. As to quaternary structure, homodimer. [4Fe-4S] cluster is required as a cofactor. The cofactor is [2Fe-2S] cluster.

It catalyses the reaction (4R,5S)-dethiobiotin + (sulfur carrier)-SH + 2 reduced [2Fe-2S]-[ferredoxin] + 2 S-adenosyl-L-methionine = (sulfur carrier)-H + biotin + 2 5'-deoxyadenosine + 2 L-methionine + 2 oxidized [2Fe-2S]-[ferredoxin]. Its pathway is cofactor biosynthesis; biotin biosynthesis; biotin from 7,8-diaminononanoate: step 2/2. Its function is as follows. Catalyzes the conversion of dethiobiotin (DTB) to biotin by the insertion of a sulfur atom into dethiobiotin via a radical-based mechanism. In Chromobacterium violaceum (strain ATCC 12472 / DSM 30191 / JCM 1249 / CCUG 213 / NBRC 12614 / NCIMB 9131 / NCTC 9757 / MK), this protein is Biotin synthase.